A 707-amino-acid polypeptide reads, in one-letter code: Eomesodermin homolog (707 aa).

The span at 27 to 42 (GGGGGGGGGGGGGGGS) shows a compositional bias: gly residues. Residues 27-125 (GGGGGGGGGG…GSPCAEEELP (99 aa)) are disordered. The segment covering 73–93 (AGSAEPAGAGAGAPAAMLSDA) has biased composition (low complexity). Serine 117 carries the post-translational modification Phosphoserine. The segment at residues 278 to 458 (LWLKFHRHQT…HNPFAKGFRD (181 aa)) is a DNA-binding region (T-box). Position 473 is a phosphothreonine (threonine 473). The tract at residues 592–707 (AMAGWGGRGA…GAYYAFYTSP (116 aa)) is required for transcription activation. The segment at 642-689 (TPPSIKSLDSSDSGVYNSACKRKRLSPSTPSNGNSPPIKCEDINTEEY) is disordered. The segment covering 648–657 (SLDSSDSGVY) has biased composition (polar residues). The segment covering 667 to 678 (SPSTPSNGNSPP) has biased composition (low complexity). Over residues 680-689 (KCEDINTEEY) the composition is skewed to basic and acidic residues.

As to expression, expressed in CD8+ T-cells.

Its subcellular location is the nucleus. In terms of biological role, functions as a transcriptional activator playing a crucial role during development. Functions in trophoblast differentiation and later in gastrulation, regulating both mesoderm delamination and endoderm specification. Plays a role in brain development being required for the specification and the proliferation of the intermediate progenitor cells and their progeny in the cerebral cortex. Required for differentiation and migration of unipolar dendritic brush cells. Also involved in the differentiation of CD8+ T-cells during immune response regulating the expression of lytic effector genes. The protein is Eomesodermin homolog (Eomes) of Mus musculus (Mouse).